A 70-amino-acid polypeptide reads, in one-letter code: Brevinin-1S (70 aa).

The signal sequence occupies residues 1-22; sequence MFTLKKSLLLLFFLGTINLSLC. Positions 23 to 44 are excised as a propeptide; it reads EEERNAEEERRDDPEERDVEVE. C64 and C70 form a disulfide bridge.

Belongs to the frog skin active peptide (FSAP) family. Brevinin subfamily. As to expression, expressed by the skin glands.

The protein localises to the secreted. Its function is as follows. Antimicrobial peptide. The sequence is that of Brevinin-1S from Odorrana schmackeri (Schmacker's frog).